The sequence spans 301 residues: Growth-regulating factor 2 (301 aa).

The QLQ domain maps to 11–46 (LFTATQWQELEHQALIYKYMAAGAPVPPDLLLHLRH). 2 consecutive short sequence motifs (bipartite nuclear localization signal) follow at residues 83-102 (RRVE…KKWR) and 120-127 (RGKNRSRK). Residues 87–131 (DPEPGRCRRTDGKKWRCSREAYGESKYCEKHMHRGKNRSRKPVEM) form the WRC domain.

Belongs to the GRF family.

The protein resides in the nucleus. Transcription activator that plays a regulatory role in gibberellin-induced stem elongation. This chain is Growth-regulating factor 2 (GRF2), found in Oryza sativa subsp. japonica (Rice).